The sequence spans 818 residues: Beta-glucosidase (818 aa).

D222 is a catalytic residue. A PA14 domain is found at 386–538 (VFSGEMTVEY…GDAGIAEAVE (153 aa)).

The protein belongs to the glycosyl hydrolase 3 family.

It is found in the cytoplasm. The catalysed reaction is Hydrolysis of terminal, non-reducing beta-D-glucosyl residues with release of beta-D-glucose.. Functionally, involved in modifying a vir-inducing plant signal molecule. Hydrolyzes coniferin but not cellobiose. In Rhizobium radiobacter (Agrobacterium tumefaciens), this protein is Beta-glucosidase (cbg-1).